Here is a 283-residue protein sequence, read N- to C-terminus: uncharacterized protein (283 aa).

Transmembrane regions (helical) follow at residues 11–31 (LFAYFSGLIAALSLFIYYVSA), 35–55 (EGALILCITFGVIAAGIWFGP), 56–76 (IYALAVTLIVLFVLGTLMMFF), and 93–113 (LVVWGIALLLFSFISGRIHDI). Residues 162-283 (NSFVFLLLHM…LENEMMMNEL (122 aa)) form the GGDEF domain.

The protein resides in the cell membrane. This is an uncharacterized protein from Bacillus subtilis (strain 168).